Reading from the N-terminus, the 140-residue chain is Cell division protein SepF (140 aa).

A disordered region spans residues 15–47 (DSQYEEPTEASQAAAPTESATNTRSTPKVVPMQ).

The protein belongs to the SepF family. As to quaternary structure, homodimer. Interacts with FtsZ.

The protein localises to the cytoplasm. Functionally, cell division protein that is part of the divisome complex and is recruited early to the Z-ring. Probably stimulates Z-ring formation, perhaps through the cross-linking of FtsZ protofilaments. Its function overlaps with FtsA. This is Cell division protein SepF from Lactiplantibacillus plantarum (strain ATCC BAA-793 / NCIMB 8826 / WCFS1) (Lactobacillus plantarum).